Here is a 412-residue protein sequence, read N- to C-terminus: Short-chain specific acyl-CoA dehydrogenase, mitochondrial (412 aa).

A mitochondrion-targeting transit peptide spans 1 to 24 (MAAALLARAGGSLGRALRARDWRR). T27 is subject to Phosphothreonine. An N6-acetyllysine; alternate modification is found at K51. K51 is modified (N6-succinyllysine; alternate). K72 is modified (N6-acetyllysine). K129 is modified (N6-acetyllysine; alternate). Position 129 is an N6-succinyllysine; alternate (K129). FAD is bound by residues 152-161 (FALSEPGNGS) and 185-187 (WIT). S161 is a binding site for substrate. K208 is subject to N6-acetyllysine. Residue K262 is modified to N6-acetyllysine; alternate. Position 262 is an N6-succinyllysine; alternate (K262). 269–272 (DMGR) contributes to the substrate binding site. An N6-acetyllysine modification is found at K292. R297 contacts FAD. Position 306 is an N6-acetyllysine; alternate (K306). K306 bears the N6-succinyllysine; alternate mark. An FAD-binding site is contributed by 365–369 (QILGG). Catalysis depends on E392, which acts as the Proton acceptor. 394–396 (TSE) is a binding site for FAD.

It belongs to the acyl-CoA dehydrogenase family. In terms of assembly, homotetramer. Requires FAD as cofactor.

It is found in the mitochondrion matrix. The catalysed reaction is a short-chain 2,3-saturated fatty acyl-CoA + oxidized [electron-transfer flavoprotein] + H(+) = a short-chain (2E)-enoyl-CoA + reduced [electron-transfer flavoprotein]. The enzyme catalyses butanoyl-CoA + oxidized [electron-transfer flavoprotein] + H(+) = (2E)-butenoyl-CoA + reduced [electron-transfer flavoprotein]. It catalyses the reaction pentanoyl-CoA + oxidized [electron-transfer flavoprotein] + H(+) = (2E)-pentenoyl-CoA + reduced [electron-transfer flavoprotein]. It carries out the reaction hexanoyl-CoA + oxidized [electron-transfer flavoprotein] + H(+) = (2E)-hexenoyl-CoA + reduced [electron-transfer flavoprotein]. Its pathway is lipid metabolism; mitochondrial fatty acid beta-oxidation. Its function is as follows. Short-chain specific acyl-CoA dehydrogenase is one of the acyl-CoA dehydrogenases that catalyze the first step of mitochondrial fatty acid beta-oxidation, an aerobic process breaking down fatty acids into acetyl-CoA and allowing the production of energy from fats. The first step of fatty acid beta-oxidation consists in the removal of one hydrogen from C-2 and C-3 of the straight-chain fatty acyl-CoA thioester, resulting in the formation of trans-2-enoyl-CoA. Among the different mitochondrial acyl-CoA dehydrogenases, short-chain specific acyl-CoA dehydrogenase acts specifically on acyl-CoAs with saturated 4 to 6 carbons long primary chains. The polypeptide is Short-chain specific acyl-CoA dehydrogenase, mitochondrial (Acads) (Rattus norvegicus (Rat)).